A 568-amino-acid chain; its full sequence is 2-succinyl-5-enolpyruvyl-6-hydroxy-3-cyclohexene-1-carboxylate synthase (568 aa).

Belongs to the TPP enzyme family. MenD subfamily. As to quaternary structure, homodimer. Mg(2+) is required as a cofactor. It depends on Mn(2+) as a cofactor. The cofactor is thiamine diphosphate.

It catalyses the reaction isochorismate + 2-oxoglutarate + H(+) = 5-enolpyruvoyl-6-hydroxy-2-succinyl-cyclohex-3-ene-1-carboxylate + CO2. Its pathway is quinol/quinone metabolism; 1,4-dihydroxy-2-naphthoate biosynthesis; 1,4-dihydroxy-2-naphthoate from chorismate: step 2/7. It functions in the pathway quinol/quinone metabolism; menaquinone biosynthesis. Its function is as follows. Catalyzes the thiamine diphosphate-dependent decarboxylation of 2-oxoglutarate and the subsequent addition of the resulting succinic semialdehyde-thiamine pyrophosphate anion to isochorismate to yield 2-succinyl-5-enolpyruvyl-6-hydroxy-3-cyclohexene-1-carboxylate (SEPHCHC). This chain is 2-succinyl-5-enolpyruvyl-6-hydroxy-3-cyclohexene-1-carboxylate synthase, found in Mannheimia succiniciproducens (strain KCTC 0769BP / MBEL55E).